A 158-amino-acid polypeptide reads, in one-letter code: Large ribosomal subunit protein bL35m (158 aa).

This sequence belongs to the bacterial ribosomal protein bL35 family.

Its subcellular location is the mitochondrion. This is Large ribosomal subunit protein bL35m (mrpl-35) from Caenorhabditis elegans.